Consider the following 74-residue polypeptide: Large ribosomal subunit protein uL29 (74 aa).

This sequence belongs to the universal ribosomal protein uL29 family.

This Streptomyces coelicolor (strain ATCC BAA-471 / A3(2) / M145) protein is Large ribosomal subunit protein uL29 (rpmC).